A 477-amino-acid polypeptide reads, in one-letter code: PTS system glucose-specific EIICB component (477 aa).

At 1-14 the chain is on the cytoplasmic side; the sequence is MFKNAFANLQKVGK. The PTS EIIC type-1 domain occupies 1-388; sequence MFKNAFANLQ…LDLKTPGRED (388 aa). A helical membrane pass occupies residues 15 to 35; that stretch reads SLMLPVSVLPIAGILLGVGSA. Over 36-50 the chain is Periplasmic; that stretch reads NFSWLPAVVSHVMAE. A helical transmembrane segment spans residues 51 to 71; the sequence is AGGSVFANMPLIFAIGVALGF. Residues 72–79 are Cytoplasmic-facing; it reads TNNDGVSA. Residues 80–100 form a helical membrane-spanning segment; it reads LAAVVAYGIMVKTMAVVAPLV. Residues 101 to 111 lie on the Periplasmic side of the membrane; that stretch reads LHLPAEEIASK. A helical transmembrane segment spans residues 112–132; it reads HLADTGVLGGIISGAIAAYMF. Residues 133–151 are Cytoplasmic-facing; it reads NRFYRIKLPEYLGFFAGKR. Residues 152–172 form a helical membrane-spanning segment; sequence FVPIISGLAAIFTGVVLSFIW. The Periplasmic portion of the chain corresponds to 173 to 190; sequence PPIGSAIQTFSQWAAYQN. A helical transmembrane segment spans residues 191–211; the sequence is PVVAFGIYGFIERCLVPFGLH. Residues 212-249 are Cytoplasmic-facing; that stretch reads HIWNVPFQMQIGEYTNAAGQVFHGDIPRYMAGDPTAGK. The helical transmembrane segment at 250–270 threads the bilayer; sequence LSGGFLFKMYGLPAAAIAIWH. The Periplasmic segment spans residues 271–279; that stretch reads SAKPENRAK. Residues 280 to 300 form a helical membrane-spanning segment; the sequence is VGGIMISAALTSFLTGITEPI. The Cytoplasmic segment spans residues 301–309; sequence EFSFMFVAP. A helical transmembrane segment spans residues 310 to 330; sequence ILYIIHAILAGLAFPICILLG. At 331-355 the chain is on the periplasmic side; sequence MRDGTSFSHGLIDFIVLSGNSSKLW. Residues 356–376 form a helical membrane-spanning segment; that stretch reads LFPIVGIGYAIVYYTIFRVLI. At 377–477 the chain is on the cytoplasmic side; the sequence is KALDLKTPGR…TEMDEYIRNH (101 aa). The PTS EIIB type-1 domain maps to 399–477; that stretch reads SEMAPALVAA…TEMDEYIRNH (79 aa). Cys-421 serves as the catalytic Phosphocysteinsyse intermediate; for EIIB activity. The residue at position 421 (Cys-421) is a Phosphocysteine.

The protein resides in the cell inner membrane. It carries out the reaction N(pros)-phospho-L-histidyl-[protein] + D-glucose(out) = D-glucose 6-phosphate(in) + L-histidyl-[protein]. Functionally, the phosphoenolpyruvate-dependent sugar phosphotransferase system (sugar PTS), a major carbohydrate active transport system, catalyzes the phosphorylation of incoming sugar substrates concomitantly with their translocation across the cell membrane. The enzyme II complex composed of PtsG and Crr is involved in glucose transport. Also functions as a chemoreceptor monitoring the environment for changes in sugar concentration. The sequence is that of PTS system glucose-specific EIICB component (ptsG) from Escherichia coli O6:H1 (strain CFT073 / ATCC 700928 / UPEC).